A 397-amino-acid chain; its full sequence is Ribosomal RNA large subunit methyltransferase I (397 aa).

The 79-residue stretch at 2–80 (AIRIKLKPGR…KEETIDADFF (79 aa)) folds into the PUA domain.

Belongs to the methyltransferase superfamily. RlmI family.

The protein localises to the cytoplasm. The enzyme catalyses cytidine(1962) in 23S rRNA + S-adenosyl-L-methionine = 5-methylcytidine(1962) in 23S rRNA + S-adenosyl-L-homocysteine + H(+). In terms of biological role, specifically methylates the cytosine at position 1962 (m5C1962) of 23S rRNA. The polypeptide is Ribosomal RNA large subunit methyltransferase I (Shewanella frigidimarina (strain NCIMB 400)).